The following is a 469-amino-acid chain: Tetratricopeptide repeat protein 38 (469 aa).

Ala-2 is modified (N-acetylalanine). Ser-5 carries the phosphoserine modification. TPR repeat units follow at residues 108-141 (REQL…HPTD), 180-213 (SYVK…NPTD), and 252-285 (CHNY…SLQA).

It belongs to the TTC38 family.

The polypeptide is Tetratricopeptide repeat protein 38 (TTC38) (Homo sapiens (Human)).